A 262-amino-acid chain; its full sequence is Tryptophan synthase alpha chain (262 aa).

Active-site proton acceptor residues include Glu-52 and Asp-63.

The protein belongs to the TrpA family. As to quaternary structure, tetramer of two alpha and two beta chains.

The enzyme catalyses (1S,2R)-1-C-(indol-3-yl)glycerol 3-phosphate + L-serine = D-glyceraldehyde 3-phosphate + L-tryptophan + H2O. Its pathway is amino-acid biosynthesis; L-tryptophan biosynthesis; L-tryptophan from chorismate: step 5/5. In terms of biological role, the alpha subunit is responsible for the aldol cleavage of indoleglycerol phosphate to indole and glyceraldehyde 3-phosphate. The protein is Tryptophan synthase alpha chain of Mycobacteroides abscessus (strain ATCC 19977 / DSM 44196 / CCUG 20993 / CIP 104536 / JCM 13569 / NCTC 13031 / TMC 1543 / L948) (Mycobacterium abscessus).